Here is a 647-residue protein sequence, read N- to C-terminus: Threonine--tRNA ligase (647 aa).

The 61-residue stretch at 1 to 61 (MIKITFPDGA…EEDGSIEIVT (61 aa)) folds into the TGS domain. Residues 240-538 (DHRKLGKELD…LIETYKGAFP (299 aa)) are catalytic. 3 residues coordinate Zn(2+): C334, H385, and H515.

Belongs to the class-II aminoacyl-tRNA synthetase family. As to quaternary structure, homodimer. Zn(2+) serves as cofactor.

The protein localises to the cytoplasm. It carries out the reaction tRNA(Thr) + L-threonine + ATP = L-threonyl-tRNA(Thr) + AMP + diphosphate + H(+). Functionally, catalyzes the attachment of threonine to tRNA(Thr) in a two-step reaction: L-threonine is first activated by ATP to form Thr-AMP and then transferred to the acceptor end of tRNA(Thr). Also edits incorrectly charged L-seryl-tRNA(Thr). This is Threonine--tRNA ligase from Streptococcus pyogenes serotype M3 (strain ATCC BAA-595 / MGAS315).